A 315-amino-acid polypeptide reads, in one-letter code: Ribosomal RNA small subunit methyltransferase H (315 aa).

S-adenosyl-L-methionine is bound by residues 34–36 (GGH), aspartate 53, aspartate 100, and histidine 107.

This sequence belongs to the methyltransferase superfamily. RsmH family.

Its subcellular location is the cytoplasm. It carries out the reaction cytidine(1402) in 16S rRNA + S-adenosyl-L-methionine = N(4)-methylcytidine(1402) in 16S rRNA + S-adenosyl-L-homocysteine + H(+). In terms of biological role, specifically methylates the N4 position of cytidine in position 1402 (C1402) of 16S rRNA. This Treponema denticola (strain ATCC 35405 / DSM 14222 / CIP 103919 / JCM 8153 / KCTC 15104) protein is Ribosomal RNA small subunit methyltransferase H.